The sequence spans 100 residues: MARVSREEVEHIANLSKLHISPEETTEMQDTLETILNFAQQIDTADTSSVEPTYHVLDLQNVLREDKAIPGIPQSLALKNAKETEDGQFKVPSIISGEDA.

The protein belongs to the GatC family. As to quaternary structure, heterotrimer of A, B and C subunits.

The catalysed reaction is L-glutamyl-tRNA(Gln) + L-glutamine + ATP + H2O = L-glutaminyl-tRNA(Gln) + L-glutamate + ADP + phosphate + H(+). It catalyses the reaction L-aspartyl-tRNA(Asn) + L-glutamine + ATP + H2O = L-asparaginyl-tRNA(Asn) + L-glutamate + ADP + phosphate + 2 H(+). Functionally, allows the formation of correctly charged Asn-tRNA(Asn) or Gln-tRNA(Gln) through the transamidation of misacylated Asp-tRNA(Asn) or Glu-tRNA(Gln) in organisms which lack either or both of asparaginyl-tRNA or glutaminyl-tRNA synthetases. The reaction takes place in the presence of glutamine and ATP through an activated phospho-Asp-tRNA(Asn) or phospho-Glu-tRNA(Gln). The polypeptide is Aspartyl/glutamyl-tRNA(Asn/Gln) amidotransferase subunit C (Staphylococcus carnosus (strain TM300)).